Reading from the N-terminus, the 378-residue chain is Inner membrane protein YibH (378 aa).

The Periplasmic segment spans residues 1–3 (MDL). A helical membrane pass occupies residues 4 to 24 (LIVLTYVALAWAVFKIFRIPV). At 25-26 (NQ) the chain is on the cytoplasmic side. The helical transmembrane segment at 27 to 47 (WTLATAALGGVFLVSGLILLM) threads the bilayer. Residues 48–54 (NYNHPYT) are Periplasmic-facing. The chain crosses the membrane as a helical span at residues 55 to 75 (FTAQKAVIAIPITPQVTGIVT). Residues 76–232 (EVTDKNNQLI…RAPSNGYVTQ (157 aa)) lie on the Cytoplasmic side of the membrane. A helical membrane pass occupies residues 233–253 (VLIRPGTYAAALPLRPVMVFI). Residues 254–280 (PEQKRQIVAQFRQNSLLRLKPGDDAEV) lie on the Periplasmic side of the membrane. A helical membrane pass occupies residues 281-301 (VFNALPGQVFHGKLTSILPVV). Over 302-309 (PGGSYQAQ) the chain is Cytoplasmic. A helical transmembrane segment spans residues 310-330 (GVLQSLTVVPGTDGVLGTIEL). At 331 to 378 (DPNDDIDALPDGIYAQVAVYSDHFSHVSVMRKVLLRMTSWMHYLYLDH) the chain is on the periplasmic side.

The protein belongs to the membrane fusion protein (MFP) (TC 8.A.1) family.

The protein resides in the cell inner membrane. The chain is Inner membrane protein YibH (yibH) from Escherichia coli O157:H7.